The following is a 369-amino-acid chain: Aminomethyltransferase (369 aa).

The protein belongs to the GcvT family. As to quaternary structure, the glycine cleavage system is composed of four proteins: P, T, L and H.

The catalysed reaction is N(6)-[(R)-S(8)-aminomethyldihydrolipoyl]-L-lysyl-[protein] + (6S)-5,6,7,8-tetrahydrofolate = N(6)-[(R)-dihydrolipoyl]-L-lysyl-[protein] + (6R)-5,10-methylene-5,6,7,8-tetrahydrofolate + NH4(+). Functionally, the glycine cleavage system catalyzes the degradation of glycine. The chain is Aminomethyltransferase from Xanthomonas oryzae pv. oryzae (strain MAFF 311018).